The primary structure comprises 221 residues: 2-amino-5-formylamino-6-ribosylaminopyrimidin-4(3H)-one 5'-monophosphate deformylase (221 aa).

Fe cation-binding residues include Glu-29, His-31, Asp-40, and His-108.

It belongs to the creatininase superfamily. FAPy deformylase family. Homodimer. It depends on Fe(2+) as a cofactor. Zn(2+) is required as a cofactor.

The enzyme catalyses 2-amino-5-formylamino-6-(5-phospho-D-ribosylamino)pyrimidin-4(3H)-one + H2O = 2,5-diamino-6-(1-D-ribosylamino)pyrimidin-4(3H)-one 5'-phosphate + formate + H(+). The protein operates within cofactor biosynthesis; coenzyme F420 biosynthesis. It participates in cofactor biosynthesis; riboflavin biosynthesis. Its function is as follows. Catalyzes the hydrolysis of the formamide of 2-amino-5-formylamino-6-ribosylamino-4(3H)-pyrimidinone 5'-monophosphate (FAPy) to form 2,5-diamino-6-ribosylamino-4(3H)-pyrimidinone 5'-phosphate (APy). The polypeptide is 2-amino-5-formylamino-6-ribosylaminopyrimidin-4(3H)-one 5'-monophosphate deformylase (Methanococcus maripaludis (strain C7 / ATCC BAA-1331)).